A 211-amino-acid chain; its full sequence is ATP-dependent dethiobiotin synthetase BioD 2 (211 aa).

13 to 18 (DIGKTI) serves as a coordination point for ATP. Position 17 (Thr17) interacts with Mg(2+). The active site involves Lys38. Thr42 contributes to the substrate binding site. ATP-binding positions include Asp50, 115 to 118 (EGAG), and 175 to 176 (NT). The Mg(2+) site is built by Asp50 and Glu115.

The protein belongs to the dethiobiotin synthetase family. Homodimer. The cofactor is Mg(2+).

It localises to the cytoplasm. The enzyme catalyses (7R,8S)-7,8-diammoniononanoate + CO2 + ATP = (4R,5S)-dethiobiotin + ADP + phosphate + 3 H(+). The protein operates within cofactor biosynthesis; biotin biosynthesis; biotin from 7,8-diaminononanoate: step 1/2. Catalyzes a mechanistically unusual reaction, the ATP-dependent insertion of CO2 between the N7 and N8 nitrogen atoms of 7,8-diaminopelargonic acid (DAPA, also called 7,8-diammoniononanoate) to form a ureido ring. The sequence is that of ATP-dependent dethiobiotin synthetase BioD 2 from Haemophilus ducreyi (strain 35000HP / ATCC 700724).